Reading from the N-terminus, the 262-residue chain is Polyamine aminopropyltransferase (262 aa).

Residues M1–P249 enclose the PABS domain. N29 provides a ligand contact to S-methyl-5'-thioadenosine. Residue D83 participates in spermidine binding. D155 (proton acceptor) is an active-site residue.

The protein belongs to the spermidine/spermine synthase family. Homodimer or homotetramer.

The protein resides in the cytoplasm. It carries out the reaction S-adenosyl 3-(methylsulfanyl)propylamine + putrescine = S-methyl-5'-thioadenosine + spermidine + H(+). It functions in the pathway amine and polyamine biosynthesis; spermidine biosynthesis; spermidine from putrescine: step 1/1. Its function is as follows. Catalyzes the irreversible transfer of a propylamine group from the amino donor S-adenosylmethioninamine (decarboxy-AdoMet) to putrescine (1,4-diaminobutane) to yield spermidine. The chain is Polyamine aminopropyltransferase from Helicobacter acinonychis (strain Sheeba).